We begin with the raw amino-acid sequence, 472 residues long: 3-isopropylmalate dehydratase large subunit (472 aa).

[4Fe-4S] cluster is bound by residues Cys347, Cys407, and Cys410.

It belongs to the aconitase/IPM isomerase family. LeuC type 1 subfamily. In terms of assembly, heterodimer of LeuC and LeuD. [4Fe-4S] cluster is required as a cofactor.

It catalyses the reaction (2R,3S)-3-isopropylmalate = (2S)-2-isopropylmalate. Its pathway is amino-acid biosynthesis; L-leucine biosynthesis; L-leucine from 3-methyl-2-oxobutanoate: step 2/4. Functionally, catalyzes the isomerization between 2-isopropylmalate and 3-isopropylmalate, via the formation of 2-isopropylmaleate. This chain is 3-isopropylmalate dehydratase large subunit, found in Parasynechococcus marenigrum (strain WH8102).